A 92-amino-acid chain; its full sequence is Small ribosomal subunit protein uS17 (92 aa).

It belongs to the universal ribosomal protein uS17 family. Part of the 30S ribosomal subunit.

Its function is as follows. One of the primary rRNA binding proteins, it binds specifically to the 5'-end of 16S ribosomal RNA. In Corynebacterium urealyticum (strain ATCC 43042 / DSM 7109), this protein is Small ribosomal subunit protein uS17.